The chain runs to 209 residues: Ribosomal RNA small subunit methyltransferase G (209 aa).

S-adenosyl-L-methionine is bound by residues G77, M82, 128 to 129 (VE), and R143.

Belongs to the methyltransferase superfamily. RNA methyltransferase RsmG family.

The protein resides in the cytoplasm. The enzyme catalyses guanosine(527) in 16S rRNA + S-adenosyl-L-methionine = N(7)-methylguanosine(527) in 16S rRNA + S-adenosyl-L-homocysteine. In terms of biological role, specifically methylates the N7 position of guanine in position 527 of 16S rRNA. This Chromobacterium violaceum (strain ATCC 12472 / DSM 30191 / JCM 1249 / CCUG 213 / NBRC 12614 / NCIMB 9131 / NCTC 9757 / MK) protein is Ribosomal RNA small subunit methyltransferase G.